Here is a 38-residue protein sequence, read N- to C-terminus: Large ribosomal subunit protein bL36 (38 aa).

The protein belongs to the bacterial ribosomal protein bL36 family.

In Flavobacterium johnsoniae (strain ATCC 17061 / DSM 2064 / JCM 8514 / BCRC 14874 / CCUG 350202 / NBRC 14942 / NCIMB 11054 / UW101) (Cytophaga johnsonae), this protein is Large ribosomal subunit protein bL36.